The following is a 180-amino-acid chain: CASP-like protein 2A3 (180 aa).

The Cytoplasmic segment spans residues Met1–Trp13. The helical transmembrane segment at Ile14–Leu34 threads the bilayer. Topologically, residues Lys35 to Tyr55 are extracellular. A helical membrane pass occupies residues Leu56–Val76. Residues Pro77–Ala85 are Cytoplasmic-facing. A helical membrane pass occupies residues Trp86–Val106. Residues Thr107 to Arg135 are Extracellular-facing. The helical transmembrane segment at Val136–Ile156 threads the bilayer. At Ser157 to Ser180 the chain is on the cytoplasmic side.

This sequence belongs to the Casparian strip membrane proteins (CASP) family. In terms of assembly, homodimer and heterodimers.

The protein localises to the cell membrane. In Picea sitchensis (Sitka spruce), this protein is CASP-like protein 2A3.